Reading from the N-terminus, the 267-residue chain is MWWFQQGLSFLPSALVIWTFATFIFSYITAITLHHVDPALPYISDTGTMPPERCLFGVMLNIAAVLGIATIYVRYKQVHALNPEENLIIKLNKAGLVLGILSCLGLSLVANFQKSALFIVHVCGAVLAFSMGSFYMFVQTILSYQMQPKIHSKQVFWVRLLLVIWCGVSALSMMTCSSILYSSDFGADIVQKLHWNPEDKGYVLHIVTTAAEWSMSFSFFGFFLTYIRDFQKITLRVEANLHGLTLYDTVPCPVTNERTPLLSRDFQ.

The next 6 membrane-spanning stretches (helical) occupy residues 8–28, 53–73, 87–107, 118–138, 160–180, and 203–223; these read LSFL…FSYI, RCLF…TIYV, LIIK…LGLS, FIVH…YMFV, LLLV…SSIL, and VLHI…FGFF.

This sequence belongs to the DRAM/TMEM150 family.

The protein localises to the lysosome membrane. It is found in the photoreceptor inner segment. The protein resides in the apical cell membrane. In terms of biological role, plays a role in the initiation of autophagy. In the retina, might be involved in the process of photoreceptor cells renewal and recycling to preserve visual function. Induces apoptotic cell death when coexpressed with DRAM1. This chain is DNA damage-regulated autophagy modulator protein 2 (Dram2), found in Rattus norvegicus (Rat).